A 78-amino-acid polypeptide reads, in one-letter code: MSRVCQVTGKKPMVGNNRSHAKNSTRRRFLPNLQNHRFWLEGEKRFVKLRISTKGMRIIDKKGIEVVVAELRARGEKV.

Residues 1–23 (MSRVCQVTGKKPMVGNNRSHAKN) are disordered.

The protein belongs to the bacterial ribosomal protein bL28 family.

The sequence is that of Large ribosomal subunit protein bL28 from Shewanella sediminis (strain HAW-EB3).